We begin with the raw amino-acid sequence, 395 residues long: MPGRSCVALVLLAAAVSCAVAQHAPPWTEDCRKSTYPPSGPTYRGAVPWYTINLDLPPYKRWHELMLDKAPVLKVIVNSLKNMINTFVPSGKIMQVVDEKLPGLLGNFPGPFEEEMKGIAAVTDIPLGEIISFNIFYELFTICTSIVAEDKKGHLIHGRNMDFGVFLGWNINNDTWVITEQLKPLTVNLDFQRNNKTVFKASSFAGYVGMLTGFKPGLFSLTLNERFSINGGYLGILEWILGKKDVMWIGFLTRTVLENSTSYEEAKNLLTKTKILAPAYFILGGNQSGEGCVITRDRKESLDVYELDAKQGRWYVVQTNYDRWKHPFFLDDRRTPAKMCLNRTSQENISFETMYDVLSTKPVLNKLTVYTTLIDVTKGQFETYLRDCPDPCIGW.

An N-terminal signal peptide occupies residues 1–21 (MPGRSCVALVLLAAAVSCAVA). A disulfide bond links Cys31 and Cys340. Residue Cys143 is the Nucleophile of the active site. N-linked (GlcNAc...) asparagine glycosylation is found at Asn173, Asn195, Asn259, Asn286, Asn342, and Asn348. Cys388 and Cys392 are oxidised to a cystine.

This sequence belongs to the acid ceramidase family. As to quaternary structure, heterodimer; disulfide-linked. The heterodimer is composed of the disulfide-linked alpha and beta chains produced by autocatalytic cleavage of the precursor. Isoform 2: May interact with NR5A1 in the nucleus; the direct interaction would negatively regulate NR5A1 transcriptional activity. In terms of processing, N-glycosylated. Post-translationally, proteolytically cleaved into two chains alpha and beta that remain associated via a disulfide bond. Cleavage gives rise to a conformation change that activates the enzyme. The same catalytic Cys residue mediates the autoproteolytic cleavage and subsequent hydrolysis of lipid substrates. The beta chain may undergo an additional C-terminal processing. In terms of tissue distribution, broadly expressed with higher expression in heart.

It is found in the lysosome. The protein resides in the secreted. Its subcellular location is the nucleus. The protein localises to the cytoplasm. It carries out the reaction an N-acylsphing-4-enine + H2O = sphing-4-enine + a fatty acid. It catalyses the reaction a beta-D-glucosyl-(1&lt;-&gt;1')-N-acylsphing-4-enine + H2O = beta-D-glucosyl-(1&lt;-&gt;1)-sphing-4-enine + a fatty acid. The catalysed reaction is a globoside Gb3Cer + H2O = a lysoGb3 + a fatty acid. The enzyme catalyses a globoside Gb3Cer (d18:1(4E)) + H2O = a lysoGb3(d18:1(4E)) + a fatty acid. It carries out the reaction N-dodecanoylsphing-4-enine + H2O = dodecanoate + sphing-4-enine. It catalyses the reaction N-tetradecanoylsphing-4-enine + H2O = tetradecanoate + sphing-4-enine. The catalysed reaction is N-hexadecanoylsphing-4-enine + H2O = sphing-4-enine + hexadecanoate. The enzyme catalyses N-octadecanoylsphing-4-enine + H2O = sphing-4-enine + octadecanoate. It carries out the reaction N-dodecanoyl-(4R)-hydroxysphinganine + H2O = (4R)-hydroxysphinganine + dodecanoate. It catalyses the reaction N-(dodecanoyl)-sphinganine + H2O = dodecanoate + sphinganine. The catalysed reaction is N-(acetyl)-sphing-4-enine + H2O = sphing-4-enine + acetate. The enzyme catalyses N-(hexanoyl)sphing-4-enine + H2O = hexanoate + sphing-4-enine. It carries out the reaction N-octanoylsphing-4-enine + H2O = octanoate + sphing-4-enine. It catalyses the reaction N-(9Z-octadecenoyl)-sphing-4-enine + H2O = sphing-4-enine + (9Z)-octadecenoate. The catalysed reaction is N-dodecanoylethanolamine + H2O = dodecanoate + ethanolamine. The protein operates within lipid metabolism; sphingolipid metabolism. Activated by Ca(2+), Mg(2+) and Na(+) cations. Inhibited by Zn(2+). Phosphatidylserine and phosphatidic acid stimulate while cardiolipin, phosphatidylcholine, lysophosphatidylcholine, phosphatidylethanolamine, phosphatidylinositol and sphingomyelin inhibit the reverse ceramide synthase activity. Phosphatidic acid, phosphatidylinositol and C16-ceramide inhibit the ceramidase/hydrolase activity. Its function is as follows. Lysosomal ceramidase that hydrolyzes sphingolipid ceramides into sphingosine and free fatty acids at acidic pH. Ceramides, sphingosine, and its phosphorylated form sphingosine-1-phosphate are bioactive lipids that mediate cellular signaling pathways regulating several biological processes including cell proliferation, apoptosis and differentiation. Has a higher catalytic efficiency towards C12-ceramides versus other ceramides. Also catalyzes the reverse reaction allowing the synthesis of ceramides from fatty acids and sphingosine. For the reverse synthetic reaction, the natural sphingosine D-erythro isomer is more efficiently utilized as a substrate compared to D-erythro-dihydrosphingosine and D-erythro-phytosphingosine, while the fatty acids with chain lengths of 12 or 14 carbons are the most efficiently used. Also has an N-acylethanolamine hydrolase activity. By regulating the levels of ceramides, sphingosine and sphingosine-1-phosphate in the epidermis, mediates the calcium-induced differentiation of epidermal keratinocytes. Also indirectly regulates tumor necrosis factor/TNF-induced apoptosis. By regulating the intracellular balance between ceramides and sphingosine, in adrenocortical cells, probably also acts as a regulator of steroidogenesis. Functionally, may directly regulate steroidogenesis by binding the nuclear receptor NR5A1 and negatively regulating its transcriptional activity. This chain is Acid ceramidase, found in Homo sapiens (Human).